Here is a 302-residue protein sequence, read N- to C-terminus: Glycine--tRNA ligase alpha subunit (302 aa).

The protein belongs to the class-II aminoacyl-tRNA synthetase family. Tetramer of two alpha and two beta subunits.

Its subcellular location is the cytoplasm. The catalysed reaction is tRNA(Gly) + glycine + ATP = glycyl-tRNA(Gly) + AMP + diphosphate. The sequence is that of Glycine--tRNA ligase alpha subunit from Psychromonas ingrahamii (strain DSM 17664 / CCUG 51855 / 37).